The chain runs to 359 residues: Transcription factor MYB115 (359 aa).

The span at methionine 1–proline 17 shows a compositional bias: polar residues. The disordered stretch occupies residues methionine 1–aspartate 21. HTH myb-type domains follow at residues lysine 153 to isoleucine 208 and lysine 209 to histidine 259. 2 consecutive DNA-binding regions (H-T-H motif) follow at residues tryptophan 181 to leucine 204 and tryptophan 232 to lysine 255.

As to expression, accumulates in reproductive organs (e.g. flowers and siliques). Expressed at very low levels in vegetative organs.

The protein localises to the nucleus. In terms of biological role, transcription activator that recognizes the motif 5'-TAACGG-3' in the promoter of target genes. Promotes vegetative-to-embryonic transition and the formation of somatic embryos from root explants in a WUS-independent manner. Together with MYB118, activates the transcription of S-ACP-DES2/AAD2 and S-ACP-DES3/AAD3 thus promoting the biosynthesis of omega-7 monounsaturated fatty acid in seed endosperm. The chain is Transcription factor MYB115 from Arabidopsis thaliana (Mouse-ear cress).